Here is a 195-residue protein sequence, read N- to C-terminus: ATP-dependent Clp protease proteolytic subunit (195 aa).

The active-site Nucleophile is the S99. H124 is a catalytic residue.

This sequence belongs to the peptidase S14 family. As to quaternary structure, fourteen ClpP subunits assemble into 2 heptameric rings which stack back to back to give a disk-like structure with a central cavity, resembling the structure of eukaryotic proteasomes.

It is found in the cytoplasm. It carries out the reaction Hydrolysis of proteins to small peptides in the presence of ATP and magnesium. alpha-casein is the usual test substrate. In the absence of ATP, only oligopeptides shorter than five residues are hydrolyzed (such as succinyl-Leu-Tyr-|-NHMec, and Leu-Tyr-Leu-|-Tyr-Trp, in which cleavage of the -Tyr-|-Leu- and -Tyr-|-Trp bonds also occurs).. Functionally, cleaves peptides in various proteins in a process that requires ATP hydrolysis. Has a chymotrypsin-like activity. Plays a major role in the degradation of misfolded proteins. The chain is ATP-dependent Clp protease proteolytic subunit from Coxiella burnetii (strain CbuG_Q212) (Coxiella burnetii (strain Q212)).